A 137-amino-acid chain; its full sequence is Probable S-adenosyl-L-methionine-binding protein MTH_1797 (137 aa).

In terms of domain architecture, TsaA-like spans 8-137 (IRPVGVVRSP…YYEDIDSLGF (130 aa)). Residues 25 to 27 (PAQ), 63 to 64 (HL), Arg87, Leu97, and 117 to 120 (LDGS) each bind S-adenosyl-L-methionine.

This sequence belongs to the tRNA methyltransferase O family.

The chain is Probable S-adenosyl-L-methionine-binding protein MTH_1797 from Methanothermobacter thermautotrophicus (strain ATCC 29096 / DSM 1053 / JCM 10044 / NBRC 100330 / Delta H) (Methanobacterium thermoautotrophicum).